We begin with the raw amino-acid sequence, 337 residues long: Cytoskeleton protein RodZ (337 aa).

Residues methionine 1–glycine 111 are Cytoplasmic-facing. An HTH cro/C1-type domain is found at leucine 19 to leucine 71. Positions glutamine 30–glutamate 49 form a DNA-binding region, H-T-H motif. Residues tryptophan 112–tryptophan 132 form a helical; Signal-anchor for type II membrane protein membrane-spanning segment. The Periplasmic segment spans residues tryptophan 133–glutamine 337. The tract at residues asparagine 155–alanine 220 is disordered. A compositionally biased stretch (polar residues) spans serine 160 to valine 192. Over residues proline 193 to proline 217 the composition is skewed to low complexity.

This sequence belongs to the RodZ family.

It localises to the cell inner membrane. In terms of biological role, cytoskeletal protein that is involved in cell-shape control through regulation of the length of the long axis. The polypeptide is Cytoskeleton protein RodZ (Citrobacter koseri (strain ATCC BAA-895 / CDC 4225-83 / SGSC4696)).